The chain runs to 356 residues: Dual-specificity RNA methyltransferase RlmN (356 aa).

Glutamate 92 (proton acceptor) is an active-site residue. The region spanning 98–327 (EKNRGTLCIS…HQGIRTMTRR (230 aa)) is the Radical SAM core domain. Cysteines 105 and 337 form a disulfide. [4Fe-4S] cluster contacts are provided by cysteine 112, cysteine 116, and cysteine 119. Residues 162-163 (GE), serine 194, 216-218 (SLH), and asparagine 294 contribute to the S-adenosyl-L-methionine site. Residue cysteine 337 is the S-methylcysteine intermediate of the active site.

This sequence belongs to the radical SAM superfamily. RlmN family. Requires [4Fe-4S] cluster as cofactor.

It is found in the cytoplasm. It catalyses the reaction adenosine(2503) in 23S rRNA + 2 reduced [2Fe-2S]-[ferredoxin] + 2 S-adenosyl-L-methionine = 2-methyladenosine(2503) in 23S rRNA + 5'-deoxyadenosine + L-methionine + 2 oxidized [2Fe-2S]-[ferredoxin] + S-adenosyl-L-homocysteine. It carries out the reaction adenosine(37) in tRNA + 2 reduced [2Fe-2S]-[ferredoxin] + 2 S-adenosyl-L-methionine = 2-methyladenosine(37) in tRNA + 5'-deoxyadenosine + L-methionine + 2 oxidized [2Fe-2S]-[ferredoxin] + S-adenosyl-L-homocysteine. Functionally, specifically methylates position 2 of adenine 2503 in 23S rRNA and position 2 of adenine 37 in tRNAs. m2A2503 modification seems to play a crucial role in the proofreading step occurring at the peptidyl transferase center and thus would serve to optimize ribosomal fidelity. The sequence is that of Dual-specificity RNA methyltransferase RlmN from Ruthia magnifica subsp. Calyptogena magnifica.